The following is a 97-amino-acid chain: MTLFSSISSISNPMTSSKSSIASFGSGTSMSSNSNACGGGCGGGNGGILGLGLGLGLNLFGGSRSRGACGGNNGGSGNPGNGPFSGGSCCGSPCCGI.

Residues methionine 1–asparagine 33 form a disordered region.

This sequence belongs to the hssA/B family.

In Dictyostelium discoideum (Social amoeba), this protein is HssA/B-like protein 47 (hssl47).